The primary structure comprises 91 residues: Probable Fe(2+)-trafficking protein (91 aa).

Belongs to the Fe(2+)-trafficking protein family.

Functionally, could be a mediator in iron transactions between iron acquisition and iron-requiring processes, such as synthesis and/or repair of Fe-S clusters in biosynthetic enzymes. This chain is Probable Fe(2+)-trafficking protein, found in Cellvibrio japonicus (strain Ueda107) (Pseudomonas fluorescens subsp. cellulosa).